The following is a 136-amino-acid chain: uncharacterized protein (136 aa).

This is an uncharacterized protein from Acheta domesticus (House cricket).